Here is a 61-residue protein sequence, read N- to C-terminus: UPF0434 protein Pmen_1615 (61 aa).

This sequence belongs to the UPF0434 family.

This is UPF0434 protein Pmen_1615 from Ectopseudomonas mendocina (strain ymp) (Pseudomonas mendocina).